Reading from the N-terminus, the 401-residue chain is Probable 2,3-bisphosphoglycerate-independent phosphoglycerate mutase (401 aa).

Belongs to the BPG-independent phosphoglycerate mutase family. A-PGAM subfamily.

It catalyses the reaction (2R)-2-phosphoglycerate = (2R)-3-phosphoglycerate. It functions in the pathway carbohydrate degradation; glycolysis; pyruvate from D-glyceraldehyde 3-phosphate: step 3/5. Functionally, catalyzes the interconversion of 2-phosphoglycerate and 3-phosphoglycerate. This Thermotoga maritima (strain ATCC 43589 / DSM 3109 / JCM 10099 / NBRC 100826 / MSB8) protein is Probable 2,3-bisphosphoglycerate-independent phosphoglycerate mutase.